Reading from the N-terminus, the 903-residue chain is Dual 3',5'-cyclic-AMP and -GMP phosphodiesterase 11A (903 aa).

GAF domains follow at residues 175 to 324 (DLTS…GIAI) and 356 to 512 (DLEK…GLGI). A 3',5'-cyclic GMP-binding site is contributed by Ser378. Residues 542-866 (SKTEVDKFKA…VKWEELDKKR (325 aa)) form the PDEase domain. His618 serves as the catalytic Proton donor. Residues His622, His658, Asp659, and Asp770 each contribute to the a divalent metal cation site. The segment at 863–903 (DKKRQHDHGASVPASPCSAAEGSETGGVPCCSNNTPPTHVS) is disordered. Residues 893–903 (CSNNTPPTHVS) are compositionally biased toward polar residues.

This sequence belongs to the cyclic nucleotide phosphodiesterase family. It depends on a divalent metal cation as a cofactor.

Its subcellular location is the cytoplasm. It localises to the cytosol. It carries out the reaction 3',5'-cyclic GMP + H2O = GMP + H(+). The enzyme catalyses 3',5'-cyclic AMP + H2O = AMP + H(+). Its function is as follows. Plays a role in signal transduction by regulating the intracellular concentration of cyclic nucleotides cAMP and cGMP. Catalyzes the hydrolysis of both cAMP and cGMP to 5'-AMP and 5'-GMP, respectively. The sequence is that of Dual 3',5'-cyclic-AMP and -GMP phosphodiesterase 11A (pde11a) from Takifugu rubripes (Japanese pufferfish).